A 410-amino-acid chain; its full sequence is Elongation factor Tu, chloroplastic (410 aa).

In terms of domain architecture, tr-type G spans 10 to 215 (KPHVNIGTIG…NVDSYIPTPE (206 aa)). The segment at 19 to 26 (GHVDHGKT) is G1. 19 to 26 (GHVDHGKT) provides a ligand contact to GTP. Thr-26 is a Mg(2+) binding site. The segment at 61 to 65 (GITIN) is G2. Residues 82–85 (DCPG) form a G3 region. GTP-binding positions include 82–86 (DCPGH) and 137–140 (NKKD). The G4 stretch occupies residues 137–140 (NKKD). Positions 175 to 177 (SAL) are G5.

This sequence belongs to the TRAFAC class translation factor GTPase superfamily. Classic translation factor GTPase family. EF-Tu/EF-1A subfamily.

The protein resides in the plastid. It localises to the chloroplast. It catalyses the reaction GTP + H2O = GDP + phosphate + H(+). Functionally, GTP hydrolase that promotes the GTP-dependent binding of aminoacyl-tRNA to the A-site of ribosomes during protein biosynthesis. The protein is Elongation factor Tu, chloroplastic (tufA) of Oltmannsiellopsis viridis (Marine flagellate).